Here is an 802-residue protein sequence, read N- to C-terminus: Aldehyde dehydrogenase family 16 member A1 (802 aa).

This sequence belongs to the aldehyde dehydrogenase family. In terms of assembly, interacts with SPG21.

The protein is Aldehyde dehydrogenase family 16 member A1 (Aldh16a1) of Mus musculus (Mouse).